Consider the following 90-residue polypeptide: Probable Fe(2+)-trafficking protein (90 aa).

Belongs to the Fe(2+)-trafficking protein family.

Its function is as follows. Could be a mediator in iron transactions between iron acquisition and iron-requiring processes, such as synthesis and/or repair of Fe-S clusters in biosynthetic enzymes. This is Probable Fe(2+)-trafficking protein from Herminiimonas arsenicoxydans.